The following is a 30-amino-acid chain: ACVPVYKECWYPQKPCCEDRVCQCSFGMTN.

2 disulfide bridges follow: Cys-2–Cys-17 and Cys-9–Cys-22.

In terms of tissue distribution, expressed by the venom gland.

It is found in the secreted. Functionally, antagonist of L-type calcium channels (Cav1/CACNA1). This Ctenus ornatus (Brazilian spider) protein is U10-ctenitoxin-Co1b.